We begin with the raw amino-acid sequence, 84 residues long: Exodeoxyribonuclease 7 small subunit (84 aa).

This sequence belongs to the XseB family. Heterooligomer composed of large and small subunits.

The protein resides in the cytoplasm. The enzyme catalyses Exonucleolytic cleavage in either 5'- to 3'- or 3'- to 5'-direction to yield nucleoside 5'-phosphates.. Bidirectionally degrades single-stranded DNA into large acid-insoluble oligonucleotides, which are then degraded further into small acid-soluble oligonucleotides. This chain is Exodeoxyribonuclease 7 small subunit, found in Yersinia pseudotuberculosis serotype O:3 (strain YPIII).